We begin with the raw amino-acid sequence, 346 residues long: Dihydroorotate dehydrogenase (quinone) (346 aa).

FMN-binding positions include 62–66 (AGMDK) and threonine 86. Lysine 66 is a binding site for substrate. 111-115 (NRMGF) lines the substrate pocket. The FMN site is built by asparagine 142 and asparagine 175. Asparagine 175 provides a ligand contact to substrate. Serine 178 serves as the catalytic Nucleophile. Asparagine 180 serves as a coordination point for substrate. Lysine 211 and valine 239 together coordinate FMN. 240–241 (NT) is a binding site for substrate. Residues glycine 261, glycine 289, and 310 to 311 (YT) each bind FMN.

This sequence belongs to the dihydroorotate dehydrogenase family. Type 2 subfamily. As to quaternary structure, monomer. FMN serves as cofactor.

The protein localises to the cell membrane. The catalysed reaction is (S)-dihydroorotate + a quinone = orotate + a quinol. Its pathway is pyrimidine metabolism; UMP biosynthesis via de novo pathway; orotate from (S)-dihydroorotate (quinone route): step 1/1. Its function is as follows. Catalyzes the conversion of dihydroorotate to orotate with quinone as electron acceptor. This is Dihydroorotate dehydrogenase (quinone) from Thermus thermophilus (strain ATCC BAA-163 / DSM 7039 / HB27).